The chain runs to 114 residues: Replication initiation control protein YabA (114 aa).

Zn(2+) is bound by residues His79, Cys81, Cys95, and Cys98.

It belongs to the YabA family. As to quaternary structure, homotetramer. Interacts with both DnaA and DnaN, acting as a bridge between these two proteins. Zn(2+) serves as cofactor.

Its subcellular location is the cytoplasm. It localises to the nucleoid. Involved in control of chromosome replication initiation. Inhibits the cooperative binding of DnaA to the oriC region, thus negatively regulating initiation of chromosome replication. Inhibits the ability of DnaA-ATP to form a helix on DNA; does not disassemble preformed DnaA-DNA helices. Decreases the residence time of DnaA on the chromosome at its binding sites (oriC, replication forks and promoter-binding sites). Tethers DnaA to the replication machinery via the DNA polymerase beta sliding clamp subunit (dnaN). Associates with oriC and other DnaA targets on the chromosome in a DnaA-dependent manner. The polypeptide is Replication initiation control protein YabA (Lactobacillus johnsonii (strain CNCM I-12250 / La1 / NCC 533)).